We begin with the raw amino-acid sequence, 182 residues long: Sec-independent protein translocase protein TatB (182 aa).

The helical transmembrane segment at 1 to 21 threads the bilayer; it reads MFDIGFSELLLVFVIGLIVLG. Disordered stretches follow at residues 87–107 and 121–182; these read QAAESMKRTYSANDPEQASDE and TQHE…SDKP. Over residues 168-182 the composition is skewed to low complexity; sequence AAPVVESSPSSSDKP.

It belongs to the TatB family. The Tat system comprises two distinct complexes: a TatABC complex, containing multiple copies of TatA, TatB and TatC subunits, and a separate TatA complex, containing only TatA subunits. Substrates initially bind to the TatABC complex, which probably triggers association of the separate TatA complex to form the active translocon.

Its subcellular location is the cell inner membrane. In terms of biological role, part of the twin-arginine translocation (Tat) system that transports large folded proteins containing a characteristic twin-arginine motif in their signal peptide across membranes. Together with TatC, TatB is part of a receptor directly interacting with Tat signal peptides. TatB may form an oligomeric binding site that transiently accommodates folded Tat precursor proteins before their translocation. The chain is Sec-independent protein translocase protein TatB from Salmonella choleraesuis (strain SC-B67).